Consider the following 337-residue polypeptide: Adenylosuccinate synthetase (337 aa).

GTP-binding positions include 12-18 and 42-44; these read GDEGKGK and GHT. Aspartate 13 functions as the Proton acceptor in the catalytic mechanism. Residues aspartate 13 and glycine 42 each contribute to the Mg(2+) site. Residues 13–16, 40–43, threonine 127, arginine 141, glutamine 179, threonine 194, and arginine 256 contribute to the IMP site; these read DEGK and NAGH. Residue histidine 43 is the Proton donor of the active site. 252-258 provides a ligand contact to substrate; that stretch reads TVTGRRR. Residues arginine 258, 284–286, and 324–326 each bind GTP; these read CLD and STG.

This sequence belongs to the adenylosuccinate synthetase family. As to quaternary structure, homodimer. Mg(2+) serves as cofactor.

It is found in the cytoplasm. It catalyses the reaction IMP + L-aspartate + GTP = N(6)-(1,2-dicarboxyethyl)-AMP + GDP + phosphate + 2 H(+). It functions in the pathway purine metabolism; AMP biosynthesis via de novo pathway; AMP from IMP: step 1/2. Its function is as follows. Plays an important role in the de novo pathway of purine nucleotide biosynthesis. Catalyzes the first committed step in the biosynthesis of AMP from IMP. The polypeptide is Adenylosuccinate synthetase (Methanococcus maripaludis (strain C6 / ATCC BAA-1332)).